Consider the following 553-residue polypeptide: uncharacterized protein (553 aa).

A signal peptide spans Met-1–Ala-31. Catalysis depends on Ser-207, which acts as the Acyl-ester intermediate. Cys-275 and Cys-292 are joined by a disulfide. Residues Asp-276, Asp-279, Val-281, Asp-283, and Leu-285 each coordinate Ca(2+). Catalysis depends on charge relay system residues Asp-444 and His-482. A disulfide bond links Cys-528 and Cys-550.

The protein belongs to the tannase family.

This is an uncharacterized protein from Agrobacterium fabrum (strain C58 / ATCC 33970) (Agrobacterium tumefaciens (strain C58)).